Consider the following 329-residue polypeptide: GTP 3',8-cyclase (329 aa).

A Radical SAM core domain is found at 8–234; that stretch reads AFARKFYYLR…QLRQRSDGPA (227 aa). GTP is bound at residue Arg-17. [4Fe-4S] cluster-binding residues include Cys-24 and Cys-28. Residue Tyr-30 participates in S-adenosyl-L-methionine binding. Cys-31 contacts [4Fe-4S] cluster. A GTP-binding site is contributed by Arg-68. Position 72 (Gly-72) interacts with S-adenosyl-L-methionine. Thr-99 provides a ligand contact to GTP. Ser-123 is a binding site for S-adenosyl-L-methionine. Residue Lys-160 coordinates GTP. S-adenosyl-L-methionine is bound at residue Met-194. [4Fe-4S] cluster is bound by residues Cys-257 and Cys-260. 262-264 contributes to the GTP binding site; the sequence is RLR. Cys-274 is a binding site for [4Fe-4S] cluster.

Belongs to the radical SAM superfamily. MoaA family. As to quaternary structure, monomer and homodimer. Requires [4Fe-4S] cluster as cofactor.

It catalyses the reaction GTP + AH2 + S-adenosyl-L-methionine = (8S)-3',8-cyclo-7,8-dihydroguanosine 5'-triphosphate + 5'-deoxyadenosine + L-methionine + A + H(+). Its pathway is cofactor biosynthesis; molybdopterin biosynthesis. Its function is as follows. Catalyzes the cyclization of GTP to (8S)-3',8-cyclo-7,8-dihydroguanosine 5'-triphosphate. The chain is GTP 3',8-cyclase from Shigella sonnei (strain Ss046).